Consider the following 1001-residue polypeptide: Phosphatidylinositol 4,5-bisphosphate 5-phosphatase A (1001 aa).

Positions 1–12 (MEGQSRSGSAKS) are enriched in polar residues. Disordered regions lie at residues 1–130 (MEGQ…VASV) and 144–412 (SASA…QPTC). The RSXSXX motif 1 signature appears at 6 to 11 (RSGSAK). Over residues 13–28 (GTRTGLGPLPGTHGAL) the composition is skewed to low complexity. Polar residues predominate over residues 29–42 (QTGTPSKKVNSSFQ). Position 56 is an asymmetric dimethylarginine; alternate (Arg56). Arg56 bears the Omega-N-methylarginine; alternate mark. Arg65 is modified (omega-N-methylarginine). Position 76 is an asymmetric dimethylarginine (Arg76). The residue at position 83 (Arg83) is an Asymmetric dimethylarginine; alternate. Arg83 carries the post-translational modification Omega-N-methylarginine; alternate. The segment covering 161-174 (SPTSRDQKQLSPTS) has biased composition (polar residues). Ser171 is subject to Phosphoserine. A compositionally biased stretch (low complexity) spans 180–196 (ALATSGLSLALASQEQP). Positions 197-210 (PQSPSSPSPVPSPV) are enriched in pro residues. Over residues 284-294 (ARPEAPRHSPE) the composition is skewed to basic and acidic residues. Phosphoserine is present on residues Ser292 and Ser325. Pro residues predominate over residues 338 to 348 (VPPPLPKPPRS). Positions 346-351 (PRSPSR) match the SH3-binding motif. Low complexity-rich tracts occupy residues 349–361 (PSRS…NRSP) and 394–411 (SPVA…AQPT). Positions 351-356 (RSPSRS) match the RSXSXX motif 2 motif. Residues 420–723 (ITVVTWNVGT…SDHKPVAARF (304 aa)) form a catalytic region. A required for ruffle localization region spans residues 724-835 (LLQFAFRDDV…IGVTEPFQIS (112 aa)). The tract at residues 837 to 1001 (PTSESASSST…LGLEDGGLGP (165 aa)) is disordered. Over residues 838–853 (TSESASSSTDSSGTSS) the composition is skewed to low complexity. 2 short sequence motifs (RSXSXX motif) span residues 869-874 (RSPSPG) and 880-885 (RSRSPG). Ser898 carries the post-translational modification Phosphoserine. Composition is skewed to low complexity over residues 905 to 917 (SRSP…QLPR) and 925 to 936 (SSGSRGSSEEGP). Positions 906–911 (RSPSPQ) match the RSXSXX motif 5 motif. A compositionally biased stretch (pro residues) spans 937–949 (SGPPGPWAFPPAV). Position 985 is a phosphoserine (Ser985).

This sequence belongs to the inositol 1,4,5-trisphosphate 5-phosphatase type II family. In terms of processing, phosphorylated on Ser/Thr residues. As to expression, expressed in heart, brain, kidney, stomach, small intestine and lung. Not expressed in spleen, thymus, skeletal muscle, testis and skin.

The protein resides in the cytoplasm. It catalyses the reaction 1D-myo-inositol 1,4,5-trisphosphate + H2O = 1D-myo-inositol 1,4-bisphosphate + phosphate. It carries out the reaction 1D-myo-inositol 1,3,4,5-tetrakisphosphate + H2O = 1D-myo-inositol 1,3,4-trisphosphate + phosphate. The enzyme catalyses a 1,2-diacyl-sn-glycero-3-phospho-(1D-myo-inositol-4,5-bisphosphate) + H2O = a 1,2-diacyl-sn-glycero-3-phospho-(1D-myo-inositol 4-phosphate) + phosphate. Functionally, inositol 5-phosphatase, which converts inositol 1,4,5-trisphosphate to inositol 1,4-bisphosphate. Also converts phosphatidylinositol 4,5-bisphosphate to phosphatidylinositol 4-phosphate and inositol 1,3,4,5-tetrakisphosphate to inositol 1,3,4-trisphosphate in vitro. May be involved in modulation of the function of inositol and phosphatidylinositol polyphosphate-binding proteins that are present at membranes ruffles. The sequence is that of Phosphatidylinositol 4,5-bisphosphate 5-phosphatase A (Inpp5j) from Rattus norvegicus (Rat).